Reading from the N-terminus, the 796-residue chain is MLVWLCGLCLVTLAGGRSAARLPLTEGRPTADFLPGDASLVEELLFGTGDTIELSCTTPGSSVSVVWFKDGISVDPPTWSHTGQKLLKIINVSYDDSGVYSCKARQSSEVLRNVTVRVTDSPSSGDDEDDDEESESANAPKFTRPEWMEKKLLAVPAANTVRFRCPAAGKPTPSITWLKNGKEFKGEHRIGGIKLRHQQWSLVMESVVPSDRGNYTCVVANKYGTIRETYTLDVLERTPHRPILQAGFRSNKTVVVGSDVEFHCKVYSDAQPHIQWLKHVEVNGSKFGPDGNPYVTVLKTAGVNTSDKELEIQFLRNVTFEDAGEYTCLAGNSIGYSHHSAWLTVLPPAEPVPDVDTSVSILAAAGCVAVVILVVIIIFTYKMKMPSKKTMNTATVHKVSKFPLKRQVSLESNSSMNSNTPLVRITRLSSSDGPMLANVSELELPADPKWELSRSRLTLGKPLGEGCFGQVVMADAVGIEKDKPNKATSVAVKMLKDDATDKDLSDLVSEMEMMKMIGKHKNIINLLGACTQDGPLYVLVEYASKGNLREYLRARRPPGMDYSFDTCKLPEEQLTFKDLVSCAYQVARGMEYLASQKCIHRDLAARNVLVTDDNVMKIADFGLARDVHNIDYYKKTTNGRLPVKWMAPEALFDRVYTHQSDVWSFGVLLWEIFTLGGSPYPGIPVEELFKLLKEGHRMDKPANCTHELYMIMRECWHAVPSQRPTFKQLVEDLDRVLTVTSTDEYLDLSVPFEQYSPACPDSHSSCSSGDDSVFAHDLPEEPCLPKHQQYNGVIRT.

A signal peptide spans Met-1 to Ala-19. Residues Ala-20–Ser-358 lie on the Extracellular side of the membrane. Positions Arg-21–Thr-119 constitute an Ig-like C2-type 1 domain. A disulfide bridge connects residues Cys-56 and Cys-102. N-linked (GlcNAc...) asparagine glycans are attached at residues Asn-91 and Asn-113. The segment at Arg-117 to Phe-142 is disordered. Residues Gly-125–Glu-135 show a composition bias toward acidic residues. 2 consecutive Ig-like C2-type domains span residues Pro-140 to Asp-233 and Pro-239 to Thr-344. Cys-165 and Cys-217 are disulfide-bonded. N-linked (GlcNAc...) asparagine glycans are attached at residues Asn-214, Asn-251, Asn-283, Asn-304, and Asn-317. Residues Cys-264 and Cys-328 are joined by a disulfide bond. A helical membrane pass occupies residues Val-359–Phe-379. The Cytoplasmic segment spans residues Thr-380–Thr-796. The Protein kinase domain occupies Leu-457 to Leu-746. ATP-binding positions include Leu-463–Val-471 and Lys-493. Asp-602 (proton acceptor) is an active-site residue. Tyr-632, Tyr-633, Tyr-709, and Tyr-745 each carry phosphotyrosine; by autocatalysis.

The protein belongs to the protein kinase superfamily. Tyr protein kinase family. Fibroblast growth factor receptor subfamily. As to quaternary structure, monomer. Homodimer after ligand binding. In terms of processing, autophosphorylated. Binding of FGF family members together with heparan sulfate proteoglycan or heparin promotes receptor dimerization and autophosphorylation on tyrosine residues. Autophosphorylation occurs in trans between the two FGFR molecules present in the dimer. In terms of tissue distribution, undetectable in the adult skeletal muscle. Low levels of expression were detected in the liver, lung and kidney. Medium levels of expression were detected in the heart, spleen, intestine and eye. Highest expression is observed in the testis.

Its subcellular location is the cell membrane. The catalysed reaction is L-tyrosyl-[protein] + ATP = O-phospho-L-tyrosyl-[protein] + ADP + H(+). Present in an inactive conformation in the absence of bound ligand. Ligand binding leads to dimerization and activation by autophosphorylation on tyrosine residues. Tyrosine-protein kinase that acts as a cell-surface receptor for fibroblast growth factors and plays an essential role in the regulation of cell proliferation, differentiation and apoptosis. Plays an essential role in the regulation of chondrocyte differentiation, proliferation and apoptosis, and is required for normal skeleton development. Regulates both osteogenesis and postnatal bone mineralization by osteoblasts. Promotes apoptosis in chondrocytes, but can also promote cancer cell proliferation. Phosphorylates PLCG1, CBL and FRS2. Ligand binding leads to the activation of several signaling cascades. Activation of PLCG1 leads to the production of the cellular signaling molecules diacylglycerol and inositol 1,4,5-trisphosphate. Phosphorylation of FRS2 triggers recruitment of GRB2, GAB1, PIK3R1 and SOS1, and mediates activation of RAS, MAPK1/ERK2, MAPK3/ERK1 and the MAP kinase signaling pathway, as well as of the AKT1 signaling pathway. In Pleurodeles waltl (Iberian ribbed newt), this protein is Fibroblast growth factor receptor 3 (FGFR3).